A 66-amino-acid chain; its full sequence is UPF0370 protein CKO_00315 (66 aa).

The chain crosses the membrane as a helical span at residues 4-24 (LAKYWWILVLVFLVGVLINVI). Residues 39 to 66 (KPELPPHRDFNDKWDDDDDWPKKDQPKK) form a disordered region. The span at 42 to 51 (LPPHRDFNDK) shows a compositional bias: basic and acidic residues.

The protein belongs to the UPF0370 family.

The protein resides in the cell membrane. The chain is UPF0370 protein CKO_00315 from Citrobacter koseri (strain ATCC BAA-895 / CDC 4225-83 / SGSC4696).